The following is a 202-amino-acid chain: Snake venom metalloproteinase TM-1 (202 aa).

Glutamine 1 is modified (pyrrolidone carboxylic acid). The Peptidase M12B domain occupies 7–202 (RYVMLAIVAD…TNPQCILNAP (196 aa)). Disulfide bonds link cysteine 118–cysteine 197, cysteine 159–cysteine 181, and cysteine 161–cysteine 164. Zn(2+) is bound at residue histidine 143. Glutamate 144 is a catalytic residue. Zn(2+) contacts are provided by histidine 147 and histidine 153.

This sequence belongs to the venom metalloproteinase (M12B) family. P-I subfamily. As to quaternary structure, monomer. The cofactor is Zn(2+). The N-terminus is blocked. Post-translationally, not glycosylated. In terms of tissue distribution, expressed by the venom gland.

It is found in the secreted. With respect to regulation, inhibited by EDTA and 1,10-phenanthroline. Is also inhibited by endogenous tripeptide inhibitors pyroGlu-Asn-Trp, pyroGlu-Gln-Trp, and pyroGlu-Lys-Trp. In terms of biological role, potent fibrinogenolytic protease which cleaves mainly the Aalpha (FGA) and Bbeta (FGB) chains of fibrinogen and slightly the gamma chain (FGG). Shows preference for substrates having a moderate-size and hydrophobic residue at the P1' position. Preferentially cleaves Ala-|-Leu and Tyr-|-Leu bonds. Is more susceptible to tripeptide inhibitors than TM-3 (AC O57413). The polypeptide is Snake venom metalloproteinase TM-1 (Protobothrops mucrosquamatus (Taiwan habu)).